The sequence spans 307 residues: Cysteine synthase (307 aa).

At Lys42 the chain carries N6-(pyridoxal phosphate)lysine. Pyridoxal 5'-phosphate-binding positions include Asn72, 176–180 (GTGGH), and Ser263.

The protein belongs to the cysteine synthase/cystathionine beta-synthase family. Requires pyridoxal 5'-phosphate as cofactor.

It catalyses the reaction O-acetyl-L-serine + hydrogen sulfide = L-cysteine + acetate. Its pathway is amino-acid biosynthesis; L-cysteine biosynthesis; L-cysteine from L-serine: step 2/2. The protein is Cysteine synthase (cysK) of Flavobacterium sp. (strain K3-15 / DSM ID92-509).